Consider the following 527-residue polypeptide: EGF domain-specific O-linked N-acetylglucosamine transferase (527 aa).

The first 19 residues, 1-19 (MLMLLVFGVLLHEVPLSGQ), serve as a signal peptide directing secretion. Positions 295–297 (DYD) match the Required for optimal activity motif. N-linked (GlcNAc...) asparagine glycosylation is present at Asn354. The short motif at 524–527 (HDEL) is the Prevents secretion from ER element.

This sequence belongs to the glycosyltransferase 61 family.

Its subcellular location is the endoplasmic reticulum lumen. It carries out the reaction L-seryl-[protein] + UDP-N-acetyl-alpha-D-glucosamine = 3-O-(N-acetyl-beta-D-glucosaminyl)-L-seryl-[protein] + UDP + H(+). The catalysed reaction is L-threonyl-[protein] + UDP-N-acetyl-alpha-D-glucosamine = 3-O-(N-acetyl-beta-D-glucosaminyl)-L-threonyl-[protein] + UDP + H(+). In terms of biological role, catalyzes the transfer of a single N-acetylglucosamine from UDP-GlcNAc to a serine or threonine residue in extracellular proteins resulting in their modification with a beta-linked N-acetylglucosamine (O-GlcNAc). Specifically glycosylates the Thr residue located between the fifth and sixth conserved cysteines of folded EGF-like domains. The sequence is that of EGF domain-specific O-linked N-acetylglucosamine transferase (Eogt) from Rattus norvegicus (Rat).